The chain runs to 300 residues: 4-hydroxy-tetrahydrodipicolinate synthase (300 aa).

Thr-45 lines the pyruvate pocket. The active-site Proton donor/acceptor is the Tyr-140. The active-site Schiff-base intermediate with substrate is Lys-169. Ile-210 is a pyruvate binding site.

Belongs to the DapA family. As to quaternary structure, homotetramer; dimer of dimers.

It localises to the cytoplasm. The enzyme catalyses L-aspartate 4-semialdehyde + pyruvate = (2S,4S)-4-hydroxy-2,3,4,5-tetrahydrodipicolinate + H2O + H(+). It participates in amino-acid biosynthesis; L-lysine biosynthesis via DAP pathway; (S)-tetrahydrodipicolinate from L-aspartate: step 3/4. Catalyzes the condensation of (S)-aspartate-beta-semialdehyde [(S)-ASA] and pyruvate to 4-hydroxy-tetrahydrodipicolinate (HTPA). This Helicobacter pylori (strain Shi470) protein is 4-hydroxy-tetrahydrodipicolinate synthase.